Here is a 134-residue protein sequence, read N- to C-terminus: Small ribosomal subunit protein uS11 (134 aa).

The protein belongs to the universal ribosomal protein uS11 family. As to quaternary structure, part of the 30S ribosomal subunit. Interacts with proteins S7 and S18. Binds to IF-3.

In terms of biological role, located on the platform of the 30S subunit, it bridges several disparate RNA helices of the 16S rRNA. Forms part of the Shine-Dalgarno cleft in the 70S ribosome. In Polaromonas sp. (strain JS666 / ATCC BAA-500), this protein is Small ribosomal subunit protein uS11.